A 151-amino-acid chain; its full sequence is Large ribosomal subunit protein uL13 (151 aa).

The protein belongs to the universal ribosomal protein uL13 family. In terms of assembly, part of the 50S ribosomal subunit.

Functionally, this protein is one of the early assembly proteins of the 50S ribosomal subunit, although it is not seen to bind rRNA by itself. It is important during the early stages of 50S assembly. The chain is Large ribosomal subunit protein uL13 from Microcystis aeruginosa (strain NIES-843 / IAM M-2473).